Consider the following 127-residue polypeptide: UPF0102 protein Cpha266_0037 (127 aa).

The protein belongs to the UPF0102 family.

The chain is UPF0102 protein Cpha266_0037 from Chlorobium phaeobacteroides (strain DSM 266 / SMG 266 / 2430).